A 194-amino-acid chain; its full sequence is Thioredoxin peroxidase (194 aa).

Positions 2-160 (LQPNMPAPNF…ALRLLDAFIF (159 aa)) constitute a Thioredoxin domain. Cys-47 acts as the Cysteine sulfenic acid (-SOH) intermediate in catalysis.

Belongs to the peroxiredoxin family. AhpC/Prx1 subfamily. As to quaternary structure, homodimer; disulfide-linked, upon oxidation.

The enzyme catalyses a hydroperoxide + [thioredoxin]-dithiol = an alcohol + [thioredoxin]-disulfide + H2O. Its function is as follows. Antioxidant. Could be involved in protection against reactive oxygen species (ROS) generated by metabolic processes and/or protection of the parasite against ROS released by immune effector cells. Thiol-specific peroxidase that catalyzes the reduction of hydrogen peroxide and organic hydroperoxides to water and alcohols, respectively. Plays a role in cell protection against oxidative stress by detoxifying peroxides and as sensor of hydrogen peroxide-mediated signaling events. The chain is Thioredoxin peroxidase from Fasciola hepatica (Liver fluke).